The following is a 414-amino-acid chain: Serine hydroxymethyltransferase (414 aa).

(6S)-5,6,7,8-tetrahydrofolate contacts are provided by residues Leu-121 and 125-127; that span reads GHL. Lys-229 carries the post-translational modification N6-(pyridoxal phosphate)lysine.

Belongs to the SHMT family. Homodimer. Pyridoxal 5'-phosphate serves as cofactor.

The protein resides in the cytoplasm. It catalyses the reaction (6R)-5,10-methylene-5,6,7,8-tetrahydrofolate + glycine + H2O = (6S)-5,6,7,8-tetrahydrofolate + L-serine. It functions in the pathway one-carbon metabolism; tetrahydrofolate interconversion. Its pathway is amino-acid biosynthesis; glycine biosynthesis; glycine from L-serine: step 1/1. Its function is as follows. Catalyzes the reversible interconversion of serine and glycine with tetrahydrofolate (THF) serving as the one-carbon carrier. This reaction serves as the major source of one-carbon groups required for the biosynthesis of purines, thymidylate, methionine, and other important biomolecules. Also exhibits THF-independent aldolase activity toward beta-hydroxyamino acids, producing glycine and aldehydes, via a retro-aldol mechanism. In Polaromonas sp. (strain JS666 / ATCC BAA-500), this protein is Serine hydroxymethyltransferase.